A 419-amino-acid polypeptide reads, in one-letter code: Tyrosine--tRNA ligase (419 aa).

Y34 contributes to the L-tyrosine binding site. Residues 39–48 (PTADSLHIGN) carry the 'HIGH' region motif. The L-tyrosine site is built by Y169 and Q173. The 'KMSKS' region signature appears at 230–234 (KFGKT). ATP is bound at residue K233. The region spanning 352-419 (VPLVELLVSA…KKKYYLIRYA (68 aa)) is the S4 RNA-binding domain.

The protein belongs to the class-I aminoacyl-tRNA synthetase family. TyrS type 1 subfamily. Homodimer.

Its subcellular location is the cytoplasm. The catalysed reaction is tRNA(Tyr) + L-tyrosine + ATP = L-tyrosyl-tRNA(Tyr) + AMP + diphosphate + H(+). Functionally, catalyzes the attachment of tyrosine to tRNA(Tyr) in a two-step reaction: tyrosine is first activated by ATP to form Tyr-AMP and then transferred to the acceptor end of tRNA(Tyr). This Bacillus caldotenax protein is Tyrosine--tRNA ligase.